A 678-amino-acid chain; its full sequence is Secretin ExeD (678 aa).

Positions 1-25 (MINKGKSWRLATVAAALMMAGSAWA) are cleaved as a signal peptide. Residues 26 to 122 (TEYSASFKNA…VVDETNPGIG (97 aa)) form an N0 region. The interval 124–188 (EMVTRVVPVR…EVVRRVDKAG (65 aa)) is N1. The tract at residues 189–264 (DQEVDIIKLR…MVRQLDRDLQ (76 aa)) is N2. The N3 stretch occupies residues 267-347 (GNTRVFYLKY…ELEQVVAKLD (81 aa)). Positions 352–602 (QVLVEAIIVE…VFIRPTILRD (251 aa)) are secretin. Positions 604 to 678 (HVYSGISSNK…GAQPFVQGNK (75 aa)) are s domain.

It belongs to the bacterial secretin family. GSP D subfamily. Forms a cylindrical channel with 15 subunits.

Its subcellular location is the cell outer membrane. In terms of biological role, involved in a type II secretion system (T2SS, formerly general secretion pathway, GSP) for the export of proteins. This subunit forms the outer membrane channel. This chain is Secretin ExeD (exeD), found in Aeromonas salmonicida.